We begin with the raw amino-acid sequence, 362 residues long: NAD(P)H-quinone oxidoreductase subunit 1, chloroplastic (362 aa).

The next 8 membrane-spanning stretches (helical) occupy residues 31-51, 99-119, 132-152, 178-198, 206-226, 268-288, 303-323, and 336-356; these read WVPL…LVIV, WLFT…YLVV, IGIF…LMSG, LAIC…VDIV, ILTW…IAAL, LVSG…PFAI, AFLG…AAIL, and LLDL…LLTA.

It belongs to the complex I subunit 1 family. In terms of assembly, NDH is composed of at least 16 different subunits, 5 of which are encoded in the nucleus.

It is found in the plastid. The protein resides in the chloroplast thylakoid membrane. It catalyses the reaction a plastoquinone + NADH + (n+1) H(+)(in) = a plastoquinol + NAD(+) + n H(+)(out). The enzyme catalyses a plastoquinone + NADPH + (n+1) H(+)(in) = a plastoquinol + NADP(+) + n H(+)(out). In terms of biological role, NDH shuttles electrons from NAD(P)H:plastoquinone, via FMN and iron-sulfur (Fe-S) centers, to quinones in the photosynthetic chain and possibly in a chloroplast respiratory chain. The immediate electron acceptor for the enzyme in this species is believed to be plastoquinone. Couples the redox reaction to proton translocation, and thus conserves the redox energy in a proton gradient. The sequence is that of NAD(P)H-quinone oxidoreductase subunit 1, chloroplastic from Nephroselmis olivacea (Green alga).